Here is a 139-residue protein sequence, read N- to C-terminus: MGFGTLVAIGVIVFAVVVITIILCLTCSCCCLYKACRRPQPVVTTTTATTVVHAPYPQQQGVPPSYPAAPYQGYQPVAIQPQPGMPVAPYPAQYPPPYPMQPPDPPAYHETVAAGAGAPYPISQPPYNPAYMDPQKPTY.

A helical transmembrane segment spans residues Phe3–Leu23.

This sequence belongs to the shisa family.

It localises to the endoplasmic reticulum membrane. The protein resides in the nucleus membrane. Functionally, can induce apoptosis in a caspase-dependent manner and plays a role in p53/TP53-dependent apoptosis. In Gallus gallus (Chicken), this protein is Protein shisa-5 (Shisa5).